Reading from the N-terminus, the 757-residue chain is Catalase-peroxidase (757 aa).

Residues 1–28 (MENQSNDISKCPFHNGSMDNQAASGTKN) form a disordered region. The span at 17–28 (SMDNQAASGTKN) shows a compositional bias: polar residues. Positions 100–247 (WHSAGTYRVH…LAAVQMGLIY (148 aa)) form a cross-link, tryptophyl-tyrosyl-methioninium (Trp-Tyr) (with M-273). Histidine 101 functions as the Proton acceptor in the catalytic mechanism. The segment at residues 247-273 (YVNPEGPDGNPDPILAAKDIRDTFGRM) is a cross-link (tryptophyl-tyrosyl-methioninium (Tyr-Met) (with W-100)). Heme b is bound at residue histidine 288.

The protein belongs to the peroxidase family. Peroxidase/catalase subfamily. As to quaternary structure, homodimer or homotetramer. Requires heme b as cofactor. In terms of processing, formation of the three residue Trp-Tyr-Met cross-link is important for the catalase, but not the peroxidase activity of the enzyme.

The enzyme catalyses H2O2 + AH2 = A + 2 H2O. It carries out the reaction 2 H2O2 = O2 + 2 H2O. Its function is as follows. Bifunctional enzyme with both catalase and broad-spectrum peroxidase activity. The sequence is that of Catalase-peroxidase from Flavobacterium johnsoniae (strain ATCC 17061 / DSM 2064 / JCM 8514 / BCRC 14874 / CCUG 350202 / NBRC 14942 / NCIMB 11054 / UW101) (Cytophaga johnsonae).